Here is a 340-residue protein sequence, read N- to C-terminus: Mitochondrial glycine transporter (340 aa).

Solcar repeat units follow at residues Pro-23–Gly-108, Leu-128–Asp-218, and Arg-237–Ser-325. 6 helical membrane passes run Leu-29–Gln-54, Gly-83–Ile-109, Leu-134–Glu-159, Gly-193–Lys-216, Ile-241–Leu-267, and Gly-300–Ile-318.

The protein belongs to the mitochondrial carrier (TC 2.A.29) family. SLC25A38 subfamily.

It is found in the mitochondrion inner membrane. The catalysed reaction is glycine(in) = glycine(out). In terms of biological role, mitochondrial glycine transporter that imports glycine into the mitochondrial matrix. Plays an important role in providing glycine for the first enzymatic step in heme biosynthesis, the condensation of glycine with succinyl-CoA to produce 5-aminolevulinate (ALA) in the mitochondrial matrix. The sequence is that of Mitochondrial glycine transporter from Debaryomyces hansenii (strain ATCC 36239 / CBS 767 / BCRC 21394 / JCM 1990 / NBRC 0083 / IGC 2968) (Yeast).